Here is a 375-residue protein sequence, read N- to C-terminus: Dual-specificity RNA methyltransferase RlmN (375 aa).

Catalysis depends on Glu94, which acts as the Proton acceptor. The Radical SAM core domain occupies 100–339 (EEDRATLCVS…VTVRKTRGDD (240 aa)). The cysteines at positions 107 and 344 are disulfide-linked. Residues Cys114, Cys118, and Cys121 each contribute to the [4Fe-4S] cluster site. S-adenosyl-L-methionine is bound by residues 168 to 169 (GE), Ser200, 222 to 224 (SLH), and Asn301. Cys344 serves as the catalytic S-methylcysteine intermediate.

This sequence belongs to the radical SAM superfamily. RlmN family. [4Fe-4S] cluster serves as cofactor.

Its subcellular location is the cytoplasm. It carries out the reaction adenosine(2503) in 23S rRNA + 2 reduced [2Fe-2S]-[ferredoxin] + 2 S-adenosyl-L-methionine = 2-methyladenosine(2503) in 23S rRNA + 5'-deoxyadenosine + L-methionine + 2 oxidized [2Fe-2S]-[ferredoxin] + S-adenosyl-L-homocysteine. The catalysed reaction is adenosine(37) in tRNA + 2 reduced [2Fe-2S]-[ferredoxin] + 2 S-adenosyl-L-methionine = 2-methyladenosine(37) in tRNA + 5'-deoxyadenosine + L-methionine + 2 oxidized [2Fe-2S]-[ferredoxin] + S-adenosyl-L-homocysteine. Its function is as follows. Specifically methylates position 2 of adenine 2503 in 23S rRNA and position 2 of adenine 37 in tRNAs. m2A2503 modification seems to play a crucial role in the proofreading step occurring at the peptidyl transferase center and thus would serve to optimize ribosomal fidelity. This Vibrio parahaemolyticus serotype O3:K6 (strain RIMD 2210633) protein is Dual-specificity RNA methyltransferase RlmN.